We begin with the raw amino-acid sequence, 364 residues long: DNA replication and repair protein RecF (364 aa).

30-37 (GNNAQGKT) is an ATP binding site.

Belongs to the RecF family.

It localises to the cytoplasm. The RecF protein is involved in DNA metabolism; it is required for DNA replication and normal SOS inducibility. RecF binds preferentially to single-stranded, linear DNA. It also seems to bind ATP. The polypeptide is DNA replication and repair protein RecF (Clostridium botulinum (strain ATCC 19397 / Type A)).